We begin with the raw amino-acid sequence, 92 residues long: Small ribosomal subunit protein bS18c (92 aa).

This sequence belongs to the bacterial ribosomal protein bS18 family. As to quaternary structure, part of the 30S ribosomal subunit.

The protein resides in the plastid. In Epifagus virginiana (Beechdrops), this protein is Small ribosomal subunit protein bS18c (rps18).